Reading from the N-terminus, the 540-residue chain is Glucose-6-phosphate isomerase (540 aa).

Glu346 (proton donor) is an active-site residue. Active-site residues include His377 and Lys505.

This sequence belongs to the GPI family.

It localises to the cytoplasm. It catalyses the reaction alpha-D-glucose 6-phosphate = beta-D-fructose 6-phosphate. The protein operates within carbohydrate biosynthesis; gluconeogenesis. It participates in carbohydrate degradation; glycolysis; D-glyceraldehyde 3-phosphate and glycerone phosphate from D-glucose: step 2/4. In terms of biological role, catalyzes the reversible isomerization of glucose-6-phosphate to fructose-6-phosphate. This is Glucose-6-phosphate isomerase from Francisella tularensis subsp. tularensis (strain WY96-3418).